The chain runs to 1122 residues: Adhesin P1 (1122 aa).

A signal peptide spans 1–26 (MKKLIFKLSVGITPLALIGLGSFGLA). 3 disordered regions span residues 182-208 (ATGD…GGGA), 244-273 (DYNS…GGRT), and 541-562 (GALQ…SNGN). Positions 195–208 (AGGGSSSSAAGGGA) are enriched in gly residues. Polar residues predominate over residues 259–273 (LDSSESSESINGGRT). The chain crosses the membrane as a helical span at residues 1001 to 1021 (AISIPIIIIALALALGLGIGI). The tract at residues 1066 to 1122 (KTPQMLQANKKDGASSPSKPSAPAAKKPAGPTKPSAPGAKPTAPAKPKAPAPTKKIE) is disordered. The segment covering 1079-1122 (ASSPSKPSAPAAKKPAGPTKPSAPGAKPTAPAKPKAPAPTKKIE) has biased composition (low complexity).

Belongs to the adhesin P1 family.

It localises to the cell membrane. In terms of biological role, could be involved in cytadherence. This chain is Adhesin P1 (gapA), found in Mycoplasmoides gallisepticum (strain R(low / passage 15 / clone 2)) (Mycoplasma gallisepticum).